The sequence spans 141 residues: ATP synthase epsilon chain (141 aa).

The protein belongs to the ATPase epsilon chain family. F-type ATPases have 2 components, CF(1) - the catalytic core - and CF(0) - the membrane proton channel. CF(1) has five subunits: alpha(3), beta(3), gamma(1), delta(1), epsilon(1). CF(0) has three main subunits: a, b and c.

Its subcellular location is the cell inner membrane. Functionally, produces ATP from ADP in the presence of a proton gradient across the membrane. The polypeptide is ATP synthase epsilon chain (Pseudomonas savastanoi pv. phaseolicola (strain 1448A / Race 6) (Pseudomonas syringae pv. phaseolicola (strain 1448A / Race 6))).